The primary structure comprises 171 residues: ATP synthase subunit b (171 aa).

Residues 14 to 34 (LGDMLFIGISFIVLMALISVV) form a helical membrane-spanning segment. Residues 56–97 (SAQKSRQEASDLADQRRDALSHSRAEASEIVADAKKSGEKQR) are compositionally biased toward basic and acidic residues. The tract at residues 56–104 (SAQKSRQEASDLADQRRDALSHSRAEASEIVADAKKSGEKQRSSIVADA) is disordered.

It belongs to the ATPase B chain family. In terms of assembly, F-type ATPases have 2 components, F(1) - the catalytic core - and F(0) - the membrane proton channel. F(1) has five subunits: alpha(3), beta(3), gamma(1), delta(1), epsilon(1). F(0) has three main subunits: a(1), b(2) and c(10-14). The alpha and beta chains form an alternating ring which encloses part of the gamma chain. F(1) is attached to F(0) by a central stalk formed by the gamma and epsilon chains, while a peripheral stalk is formed by the delta and b chains.

The protein localises to the cell membrane. In terms of biological role, f(1)F(0) ATP synthase produces ATP from ADP in the presence of a proton or sodium gradient. F-type ATPases consist of two structural domains, F(1) containing the extramembraneous catalytic core and F(0) containing the membrane proton channel, linked together by a central stalk and a peripheral stalk. During catalysis, ATP synthesis in the catalytic domain of F(1) is coupled via a rotary mechanism of the central stalk subunits to proton translocation. Functionally, component of the F(0) channel, it forms part of the peripheral stalk, linking F(1) to F(0). The chain is ATP synthase subunit b from Lactiplantibacillus plantarum (strain ATCC BAA-793 / NCIMB 8826 / WCFS1) (Lactobacillus plantarum).